The primary structure comprises 351 residues: Transmembrane protein 255A (351 aa).

4 consecutive transmembrane segments (helical) span residues 30–50 (IYVT…GLAA), 57–77 (VTVG…LGII), 89–109 (LVAS…CAIV), and 226–246 (TILN…LGGF). A disordered region spans residues 302–331 (FPSSPPSGLSDEQEPQSPSPSPSYMWSSSA).

The protein belongs to the TMEM255 family.

It localises to the membrane. The protein is Transmembrane protein 255A (Tmem255a) of Rattus norvegicus (Rat).